A 147-amino-acid chain; its full sequence is MVEWTDDERAIINSIFSTLDYEEIGRKSLCRCLIVYPWTQRYFGGFGNLYNAETILCNPLIAAHGTKILHGLDRALKNMDDIKNTYAELSQLHSDKLHVDPDNFRLLADCLTVVIAAKMGTAFTVETQVAWQKFLAVVVSALGRQYH.

The region spanning 3 to 147 is the Globin domain; that stretch reads EWTDDERAII…VVSALGRQYH (145 aa). The heme b site is built by His-64 and His-93.

Belongs to the globin family. Heterotetramer of two alpha chains and two beta chains. As to expression, red blood cells.

Its function is as follows. Involved in oxygen transport from gills to the various peripheral tissues. This Merlangius merlangus (Whiting) protein is Hemoglobin subunit beta (hbb).